The primary structure comprises 154 residues: Ribosome maturation factor RimP (154 aa).

This sequence belongs to the RimP family.

It localises to the cytoplasm. In terms of biological role, required for maturation of 30S ribosomal subunits. The chain is Ribosome maturation factor RimP from Finegoldia magna (strain ATCC 29328 / DSM 20472 / WAL 2508) (Peptostreptococcus magnus).